A 635-amino-acid polypeptide reads, in one-letter code: MITITLPDGSRREFEGPVSVMQVAHAIGPGLAKATIAGQIDGGHLVDASDLIEHDAILRIITPEDQEALEIIRHSCAHLVGHAVKQLYPEAKMVIGPVIADGFYYDIYSKRPFTPEDLAAIEQRMVELIAQDYDVVKHITARHDVVRLFKERGEDYKLRLIEDMGPEVTAMGIYHHQEYVDMCRGPHVPNTRFLKAFRLTRISGAYWRGNTKNEQLQRIYGTAWADKKQLEAYMQRLQDAEKRDHRKIGKAQDLFHLQEEGPGLVFWHPKGWVIWQTIENYIRRVYRNSGYGELRCPQILDVSLWQKSGHWDNYKENMFFTDSEKRTYAVKPMNCPGHVQVFNQGLHSYRDLPIRYGEFGACHRNEPSGALHGLLRVRGFTQDDGHIFCTEAQIEAEVTAFHRQALQVYADFGFENIQIKIALRPDKRLGDSLSWDKAEAALRAALSACEVEWQELPGEGAFYGPKIEYHLKDAIGRTWQLGTIQVDFMMPARLGAEYVDERSQRRHPVMLHRAIVGSMERFIGILIEHYAGIWPTWLAPVQVVIANITDAQYEYAEQVHKALLNQGFRVNIDLRNEKIGYKIREHTLQRVPYLLVVGDREKENGTVAVRTCSREDLGAMSISTFVERLQTEQVV.

The region spanning Met1–Thr62 is the TGS domain. The segment at Asp244–Pro535 is catalytic. Zn(2+) contacts are provided by Cys335, His386, and His512.

Belongs to the class-II aminoacyl-tRNA synthetase family. Homodimer. Zn(2+) serves as cofactor.

The protein localises to the cytoplasm. It carries out the reaction tRNA(Thr) + L-threonine + ATP = L-threonyl-tRNA(Thr) + AMP + diphosphate + H(+). Catalyzes the attachment of threonine to tRNA(Thr) in a two-step reaction: L-threonine is first activated by ATP to form Thr-AMP and then transferred to the acceptor end of tRNA(Thr). Also edits incorrectly charged L-seryl-tRNA(Thr). The sequence is that of Threonine--tRNA ligase from Xylella fastidiosa (strain M23).